The sequence spans 154 residues: SKP1-like protein 13 (154 aa).

The segment at 96–154 is interaction with the F-box domain of F-box proteins; that stretch reads MLAANYLNIKDLLDLGCQTVADMITGKKPDEIRALLGIENDFTPEEEEEIRKENQWAFE.

The protein belongs to the SKP1 family. In terms of assembly, part of a SCF (SKP1-cullin-F-box) protein ligase complex. Interacts with ADO3/FKF1, EBF1, PP2A13, SKIP15, SKIP16, CPR1/CPR30, At1g55000, At3g61590, At1g67340, At1g78100, At3g04660, At4g38940, At4g39550 and At5g49610. As to expression, mostly expressed in inflorescences, and, to a lower extent, in seedlings and siliques. Also detected in cotyledons, leaves, pollen and seeds.

Its subcellular location is the nucleus. It participates in protein modification; protein ubiquitination. Its function is as follows. Involved in ubiquitination and subsequent proteasomal degradation of target proteins. Together with CUL1, RBX1 and a F-box protein, it forms a SCF E3 ubiquitin ligase complex. The functional specificity of this complex depends on the type of F-box protein. In the SCF complex, it serves as an adapter that links the F-box protein to CUL1. The chain is SKP1-like protein 13 (ASK13) from Arabidopsis thaliana (Mouse-ear cress).